The following is a 430-amino-acid chain: Asparagine--tRNA ligase (430 aa).

Belongs to the class-II aminoacyl-tRNA synthetase family. Homodimer.

The protein resides in the cytoplasm. It carries out the reaction tRNA(Asn) + L-asparagine + ATP = L-asparaginyl-tRNA(Asn) + AMP + diphosphate + H(+). The sequence is that of Asparagine--tRNA ligase from Staphylococcus epidermidis (strain ATCC 35984 / DSM 28319 / BCRC 17069 / CCUG 31568 / BM 3577 / RP62A).